We begin with the raw amino-acid sequence, 77 residues long: Small ribosomal subunit protein bS16 (77 aa).

This sequence belongs to the bacterial ribosomal protein bS16 family.

This is Small ribosomal subunit protein bS16 from Helicobacter hepaticus (strain ATCC 51449 / 3B1).